Reading from the N-terminus, the 266-residue chain is Undecaprenyl-diphosphatase (266 aa).

8 consecutive transmembrane segments (helical) span residues 1-21 (MTLL…FLPV), 40-60 (LPLY…LVVL), 90-110 (LLVV…KPIF), 113-133 (LNQP…LWFT), 145-165 (LSWL…IPGI), 188-208 (FSFL…IDEV), 217-237 (PLLG…LWLF), and 245-265 (FKWF…KVAM).

This sequence belongs to the UppP family.

The protein localises to the cell inner membrane. The enzyme catalyses di-trans,octa-cis-undecaprenyl diphosphate + H2O = di-trans,octa-cis-undecaprenyl phosphate + phosphate + H(+). Its function is as follows. Catalyzes the dephosphorylation of undecaprenyl diphosphate (UPP). Confers resistance to bacitracin. The protein is Undecaprenyl-diphosphatase of Acaryochloris marina (strain MBIC 11017).